The primary structure comprises 172 residues: Female-specific lacrimal gland protein (172 aa).

The signal sequence occupies residues 1–16 (MVKFLLLALALGVSCA). Cystine bridges form between Cys60-Cys64 and Cys79-Cys170.

The protein belongs to the calycin superfamily. Lipocalin family. Expressed in the lacrimal gland from where it is secreted into tears (at protein level).

The protein localises to the secreted. This is Female-specific lacrimal gland protein from Mesocricetus auratus (Golden hamster).